Reading from the N-terminus, the 885-residue chain is MELRCGGLLFSSRFDSGNLAHVEKVESVSNDGEGVAGGASASTSSIASSPDYEFNVWTRPDCAETEFENGNRSWFYFSVRGGTPGKLIKINIMNMNKQSKLYSQGMAPFVRTLPTRPRWERIRDRPTFEMTETQFVLSFIHRFVEGRGATTFFAFCYPFSYSDCQDLLSQLDQRFLENSPTHSSPLDTIYYHRETLCYSLDGLRVDLLTISSCHGLREDREPRLEQLFPDASTPRPFRFTGKRIFFLSSRVHPGETPSSFVFNGFLDFILRPDDPRAQTLRRLFVFKLIPMLNPDGVVRGHYRTDSRGVNLNRQYLKPDAVLHPAIYGAKAVLLYHHVHSRLNSQSPSEHQHSSHLPPDAPLSDPEKADSLQNRAHLGRSSSGDKPEAWTQTEVAEQKPNSVWITPQESAEVEQLAPDAIPPRESGVAYYVDLHGHASKRGCFMYGNSFSDENTQVENMLYPKLISLNSAHFDFQGCNFSEKNMYARDRRDGQSKEGSGRVAIYKASGIIHSYTLECNYNTGRSVNSIPAACHDNGRASPPPPPAFPSRYTVELFEQVGRAMAIAALDMAECNPWPRIVLSEHSSLTNLRAWMLKHVRSSRGLSTTVNMSISKKRGSRTPPRSNNGLPVSCSENTLSRARSFSTGTSAGGSSSSQQNSPQMKNSPSFPFHGSRPAGLPGLGSSTQKVSHRVLGPVREPRSQDRRRRQQPVTHRPTSSSLAPSPTPASSNLASSHMGSCLLPNSLSISGSSCSFLSSGDKTEAVMVIGKGLLGAGPRIPCIRTRLQARPRLAQGSPPTRRGMRGSPGPTSPIPQTKKSSEPELGPRCTPRLPQAGPPRPCSAPAFSPISCSLSDSQSRICYSGGPLGQTEVCFVPKSPPFTVSPRV.

One can recognise a Peptidase M14 domain in the interval 157–570 (YPFSYSDCQD…AMAIAALDMA (414 aa)). Zn(2+) contacts are provided by histidine 252 and glutamate 255. The segment at 343 to 402 (NSQSPSEHQHSSHLPPDAPLSDPEKADSLQNRAHLGRSSSGDKPEAWTQTEVAEQKPNSV) is disordered. Over residues 388 to 402 (AWTQTEVAEQKPNSV) the composition is skewed to polar residues. Histidine 434 is a Zn(2+) binding site. The active-site Proton donor/acceptor is the glutamate 516. Disordered stretches follow at residues 605–733 (TTVN…LASS) and 783–839 (RLQA…PRPC). Polar residues predominate over residues 620-640 (PPRSNNGLPVSCSENTLSRAR). Low complexity-rich tracts occupy residues 641–666 (SFST…NSPS) and 714–733 (PTSS…LASS). Serine 840 carries the phosphoserine modification.

This sequence belongs to the peptidase M14 family. It depends on Zn(2+) as a cofactor.

The protein resides in the cytoplasm. It localises to the cytosol. It is found in the nucleus. The protein localises to the cytoskeleton. Its subcellular location is the spindle. The protein resides in the midbody. It carries out the reaction gamma-L-glutamyl-L-glutamyl-[protein] + H2O = L-glutamyl-[protein] + L-glutamate. It catalyses the reaction (L-glutamyl)(n+1)-gamma-L-glutamyl-L-glutamyl-[protein] + H2O = (L-glutamyl)(n)-gamma-L-glutamyl-L-glutamyl-[protein] + L-glutamate. The enzyme catalyses C-terminal L-alpha-aminoacyl-L-glutamyl-[tubulin] + H2O = C-terminal L-alpha-aminoacyl-[tubulin] + L-glutamate. The catalysed reaction is C-terminal L-alpha-aminoacyl-L-glutamyl-L-glutamyl-[tubulin] + H2O = C-terminal L-alpha-aminoacyl-L-glutamyl-[tubulin] + L-glutamate. In terms of biological role, metallocarboxypeptidase that mediates deglutamylation of tubulin and non-tubulin target proteins. Catalyzes the removal of polyglutamate side chains present on the gamma-carboxyl group of glutamate residues within the C-terminal tail of alpha- and beta-tubulin. Cleaves alpha- and gamma-linked polyglutamate tubulin side-chain, as well as the branching point glutamate. Also catalyzes the removal of alpha-linked glutamate residues from the carboxy-terminus of alpha-tubulin. Mediates deglutamylation of nucleotidyltransferase CGAS, leading to CGAS antiviral defense response activation. This Bos taurus (Bovine) protein is Cytosolic carboxypeptidase-like protein 5 (AGBL5).